The chain runs to 384 residues: Isoafricanol synthase (384 aa).

Residues Asp-95, Asn-245, Ser-249, and Glu-253 each coordinate Mg(2+).

The protein belongs to the terpene synthase family. Mg(2+) is required as a cofactor.

It carries out the reaction (2E,6E)-farnesyl diphosphate + H2O = (+)-isoafricanol + diphosphate. Its function is as follows. Catalyzes the cyclization of farnesyl diphosphate (FPP) to isoafricanol. This is Isoafricanol synthase from Streptomyces violaceusniger (strain Tu 4113).